Here is a 675-residue protein sequence, read N- to C-terminus: UvrABC system protein B (675 aa).

The 386-residue stretch at glutamate 32–valine 417 folds into the Helicase ATP-binding domain. Glycine 45 to threonine 52 is an ATP binding site. Positions tyrosine 98–isoleucine 121 match the Beta-hairpin motif. The region spanning glutamine 436 to isoleucine 602 is the Helicase C-terminal domain. The region spanning isoleucine 634 to asparagine 669 is the UVR domain.

It belongs to the UvrB family. As to quaternary structure, forms a heterotetramer with UvrA during the search for lesions. Interacts with UvrC in an incision complex.

It is found in the cytoplasm. Functionally, the UvrABC repair system catalyzes the recognition and processing of DNA lesions. A damage recognition complex composed of 2 UvrA and 2 UvrB subunits scans DNA for abnormalities. Upon binding of the UvrA(2)B(2) complex to a putative damaged site, the DNA wraps around one UvrB monomer. DNA wrap is dependent on ATP binding by UvrB and probably causes local melting of the DNA helix, facilitating insertion of UvrB beta-hairpin between the DNA strands. Then UvrB probes one DNA strand for the presence of a lesion. If a lesion is found the UvrA subunits dissociate and the UvrB-DNA preincision complex is formed. This complex is subsequently bound by UvrC and the second UvrB is released. If no lesion is found, the DNA wraps around the other UvrB subunit that will check the other stand for damage. This is UvrABC system protein B from Neisseria gonorrhoeae (strain ATCC 700825 / FA 1090).